Consider the following 316-residue polypeptide: DNA-directed RNA polymerase III subunit RPC6 (316 aa).

Residue Ala2 is modified to N-acetylalanine. Glycyl lysine isopeptide (Lys-Gly) (interchain with G-Cter in SUMO2) cross-links involve residues Lys5 and Lys7. Residues Cys287, Cys290, Cys296, and Cys307 each coordinate [4Fe-4S] cluster.

It belongs to the eukaryotic RPC34/RPC39 RNA polymerase subunit family. Component of the RNA polymerase III complex consisting of 17 subunits: a ten-subunit horseshoe-shaped catalytic core composed of POLR3A/RPC1, POLR3B/RPC2, POLR1C/RPAC1, POLR1D/RPAC2, POLR3K/RPC10, POLR2E/RPABC1, POLR2F/RPABC2, POLR2H/RPABC3, POLR2K/RPABC4 and POLR2L/RPABC5; a mobile stalk composed of two subunits POLR3H/RPC8 and CRCP/RPC9, protruding from the core and functioning primarily in transcription initiation; and additional subunits homologous to general transcription factors of the RNA polymerase II machinery, POLR3C/RPC3-POLR3F/RPC6-POLR3G/RPC7 heterotrimer required for transcription initiation and POLR3D/RPC4-POLR3E/RPC5 heterodimer involved in both transcription initiation and termination. Directly interacts with POLR3C. Interacts with TBP and TFIIIB90 and GTF3C4. Interacts with MAF1. As part of the RNA polymerase III complex, interacts with PKP2.

Its subcellular location is the nucleus. Its function is as follows. DNA-dependent RNA polymerase catalyzes the transcription of DNA into RNA using the four ribonucleoside triphosphates as substrates. Specific peripheric component of RNA polymerase III (Pol III) which synthesizes small non-coding RNAs including 5S rRNA, snRNAs, tRNAs and miRNAs from at least 500 distinct genomic loci. Part of POLR3C/RPC3-POLR3F/RPC6-POLR3G/RPC7 heterotrimer that coordinates the dynamics of Pol III stalk and clamp modules during the transition from apo to elongation state. Pol III plays a key role in sensing and limiting infection by intracellular bacteria and DNA viruses, including varicella zoster virus. Acts as a nuclear and cytosolic DNA sensor detecting AT-rich DNA, involved in innate immune response. Can sense non-self dsDNA that serves as template for transcription into dsRNA. The non-self RNA polymerase III transcripts, such as Epstein-Barr virus-encoded RNAs (EBERs) induce type I interferon and NF-kappa-B through the RIG-I pathway. Preferentially binds double-stranded DNA (dsDNA). This Bos taurus (Bovine) protein is DNA-directed RNA polymerase III subunit RPC6 (POLR3F).